A 1800-amino-acid polypeptide reads, in one-letter code: U3 small nucleolar RNA-associated protein 10 (1800 aa).

HEAT repeat units lie at residues 426–467 (FTQS…TTPA) and 581–619 (DVDL…LYKK). Transmembrane regions (helical) follow at residues 944 to 964 (IQSG…AIVN) and 1000 to 1020 (ALLL…HSVM). 4 HEAT repeats span residues 1043 to 1081 (DQTI…AFEH), 1250 to 1288 (TLSL…QNPE), 1294 to 1333 (QHRM…KYGR), and 1755 to 1793 (LALL…VLGE).

Belongs to the HEATR1/UTP10 family. Component of the ribosomal small subunit (SSU) processome.

The protein localises to the nucleus. It is found in the nucleolus. It localises to the membrane. Involved in nucleolar processing of pre-18S ribosomal RNA. Involved in ribosome biosynthesis. This is U3 small nucleolar RNA-associated protein 10 from Aspergillus niger (strain ATCC MYA-4892 / CBS 513.88 / FGSC A1513).